A 678-amino-acid polypeptide reads, in one-letter code: SPS-sensor component PTR3 (678 aa).

Disordered regions lie at residues 111 to 158 and 179 to 211; these read TGQG…SDPT and ANTEVGSDHPLTTGTTRDQEEHTTKENYSSSLL. Residues 127–144 are compositionally biased toward low complexity; the sequence is TSPSSSSLSLTPSRSSST. The span at 149–158 shows a compositional bias: basic and acidic residues; sequence ADNKTLSDPT. Polar residues predominate over residues 179–194; sequence ANTEVGSDHPLTTGTT.

Homodimer. Component of the plasma membrane SPS (SSY1-PTR3-SSY5) amino acid sensor complex. Interacts directly with SSY1 and SSY5. Post-translationally, hyperphosphorylated in response to extracellular amino acids and dependent on the amino acid sensor component SSY1. Phosphorylation is positively regulated by casein kinases YCK1 and YCK2, and negatively regulated by phosphatase PP2A regulatory subunit RTS1.

The protein localises to the cell membrane. Its function is as follows. Component of the SPS-sensor system, which regulates the expression of several amino acid-metabolizing enzymes and amino acid- and peptide-permeases in response to extracellular amino acid levels by controlling the activity of two transcription factors, STP1 and STP2. The chain is SPS-sensor component PTR3 (PTR3) from Saccharomyces cerevisiae (strain ATCC 204508 / S288c) (Baker's yeast).